A 163-amino-acid chain; its full sequence is MAIFAEAETWVAIAFVILMGIFAYLGVHRTVLKALDNRRDRIKAELDEARKLKDEAAKLLADYRARRAQAEREAEAIVASAKADAERIAAESKAKLEDFVVRRTKTAESKIALAEAQALADVRAAAAEAAVSAAAIVLSQSVKGQVADDLLGKGIQEVRSKLN.

A helical transmembrane segment spans residues 7–27 (AETWVAIAFVILMGIFAYLGV).

Belongs to the ATPase B chain family. F-type ATPases have 2 components, F(1) - the catalytic core - and F(0) - the membrane proton channel. F(1) has five subunits: alpha(3), beta(3), gamma(1), delta(1), epsilon(1). F(0) has three main subunits: a(1), b(2) and c(10-14). The alpha and beta chains form an alternating ring which encloses part of the gamma chain. F(1) is attached to F(0) by a central stalk formed by the gamma and epsilon chains, while a peripheral stalk is formed by the delta and b chains.

The protein localises to the cell inner membrane. Functionally, f(1)F(0) ATP synthase produces ATP from ADP in the presence of a proton or sodium gradient. F-type ATPases consist of two structural domains, F(1) containing the extramembraneous catalytic core and F(0) containing the membrane proton channel, linked together by a central stalk and a peripheral stalk. During catalysis, ATP synthesis in the catalytic domain of F(1) is coupled via a rotary mechanism of the central stalk subunits to proton translocation. Component of the F(0) channel, it forms part of the peripheral stalk, linking F(1) to F(0). The polypeptide is ATP synthase subunit b 1 (Rhodopseudomonas palustris (strain HaA2)).